The following is a 232-amino-acid chain: MSIHIGAKEGDIAETVLLPGDPLRAKYIAENLLEDAKCYNEVRGMYGFTGYYKGKRVSVQGTGMGVPSISIYVNELITSYGVKNLIRIGTCGSLQPDIKIRDIVIAMSASTDSAINKIRFNGMDYAPTASFKLLKKAYDKAVEMGIEPKVGNILTTDTFYHDDPESWRLWAKFGVLAVEMETAGLYTLAAKYGVDALTILTVSDSLVTGEATSAEERQKTFMDMVKIALEIA.

Histidine 4 is a binding site for a purine D-ribonucleoside. Residues glycine 20, arginine 24, arginine 43, and 87 to 90 (RIGT) contribute to the phosphate site. A purine D-ribonucleoside contacts are provided by residues 179 to 181 (EME) and 203 to 204 (SD). Aspartate 204 serves as the catalytic Proton donor.

The protein belongs to the PNP/UDP phosphorylase family. Homohexamer; trimer of homodimers.

It catalyses the reaction a purine D-ribonucleoside + phosphate = a purine nucleobase + alpha-D-ribose 1-phosphate. It carries out the reaction a purine 2'-deoxy-D-ribonucleoside + phosphate = a purine nucleobase + 2-deoxy-alpha-D-ribose 1-phosphate. In terms of biological role, catalyzes the reversible phosphorolytic breakdown of the N-glycosidic bond in the beta-(deoxy)ribonucleoside molecules, with the formation of the corresponding free purine bases and pentose-1-phosphate. This Caldanaerobacter subterraneus subsp. tengcongensis (strain DSM 15242 / JCM 11007 / NBRC 100824 / MB4) (Thermoanaerobacter tengcongensis) protein is Purine nucleoside phosphorylase DeoD-type.